The primary structure comprises 370 residues: Integrin-linked kinase-associated serine/threonine phosphatase 2C (370 aa).

Met1 carries the N-acetylmethionine modification. The disordered stretch occupies residues 1–69 (MDLFGDLPEP…SDEEKNGSEE (69 aa)). Ser13 carries the post-translational modification Phosphoserine. Positions 33–45 (SSGDSGSLDTSLS) are enriched in low complexity. Over residues 46–69 (EEVKNEGKGAKRKASDEEKNGSEE) the composition is skewed to basic and acidic residues. Positions 86-368 (KGYVAERKGE…DNVTVMVVRI (283 aa)) constitute a PPM-type phosphatase domain. Asp130 and Gly131 together coordinate Mn(2+). Lys188 carries the N6-acetyllysine modification. Residues Asp304 and Asp359 each coordinate Mn(2+).

Belongs to the PP2C family. As to quaternary structure, interacts with ILK. The cofactor is Mg(2+). Mn(2+) serves as cofactor.

The protein resides in the cytoplasm. It carries out the reaction O-phospho-L-seryl-[protein] + H2O = L-seryl-[protein] + phosphate. The enzyme catalyses O-phospho-L-threonyl-[protein] + H2O = L-threonyl-[protein] + phosphate. In terms of biological role, protein phosphatase that may play a role in regulation of cell cycle progression via dephosphorylation of its substrates whose appropriate phosphorylation states might be crucial for cell proliferation. Selectively associates with integrin linked kinase (ILK), to modulate cell adhesion and growth factor signaling. Inhibits the ILK-GSK3B signaling axis and may play an important role in inhibiting oncogenic transformation. The sequence is that of Integrin-linked kinase-associated serine/threonine phosphatase 2C (ILKAP) from Bos taurus (Bovine).